The sequence spans 597 residues: Elongation factor 4 (597 aa).

The 183-residue stretch at 2–184 folds into the tr-type G domain; that stretch reads KHIRNFSIIA…TIVKSIPAPE (183 aa). GTP contacts are provided by residues 14–19 and 131–134; these read DHGKST and NKID.

It belongs to the TRAFAC class translation factor GTPase superfamily. Classic translation factor GTPase family. LepA subfamily.

Its subcellular location is the cell inner membrane. The enzyme catalyses GTP + H2O = GDP + phosphate + H(+). Required for accurate and efficient protein synthesis under certain stress conditions. May act as a fidelity factor of the translation reaction, by catalyzing a one-codon backward translocation of tRNAs on improperly translocated ribosomes. Back-translocation proceeds from a post-translocation (POST) complex to a pre-translocation (PRE) complex, thus giving elongation factor G a second chance to translocate the tRNAs correctly. Binds to ribosomes in a GTP-dependent manner. The protein is Elongation factor 4 of Aliivibrio fischeri (strain ATCC 700601 / ES114) (Vibrio fischeri).